The sequence spans 334 residues: Tryptophan--tRNA ligase (334 aa).

ATP contacts are provided by residues 12-14 (QPS) and 20-21 (GN). The short motif at 13-21 (PSGIPTLGN) is the 'HIGH' region element. Asp-136 is a binding site for L-tryptophan. ATP is bound by residues 148-150 (GKD), Ile-187, and 196-200 (KMSKS). Positions 196–200 (KMSKS) match the 'KMSKS' region motif.

The protein belongs to the class-I aminoacyl-tRNA synthetase family. Homodimer.

It localises to the cytoplasm. It catalyses the reaction tRNA(Trp) + L-tryptophan + ATP = L-tryptophyl-tRNA(Trp) + AMP + diphosphate + H(+). In terms of biological role, catalyzes the attachment of tryptophan to tRNA(Trp). The polypeptide is Tryptophan--tRNA ligase (Wigglesworthia glossinidia brevipalpis).